The following is a 240-amino-acid chain: Putative RING finger protein ORF96 (240 aa).

The RING-type 1 zinc finger occupies 9-44 (CVVCMEEKPLVVFEPCMHHNCCESCSGHVSNCPYCR). The RING-type 2; degenerate zinc-finger motif lies at 150–202 (CVICKKEIKEEVGKTYMHACCTATICKPCAKAILKAMVEKEITENLPFCPYCF).

The protein is Putative RING finger protein ORF96 of Ostreid herpesvirus 1 (isolate France) (OsHV-1).